Reading from the N-terminus, the 294-residue chain is Nucleotide-binding protein Swol_0262 (294 aa).

G15–T22 serves as a coordination point for ATP. A GTP-binding site is contributed by D65–G68.

This sequence belongs to the RapZ-like family.

In terms of biological role, displays ATPase and GTPase activities. This Syntrophomonas wolfei subsp. wolfei (strain DSM 2245B / Goettingen) protein is Nucleotide-binding protein Swol_0262.